A 308-amino-acid chain; its full sequence is uncharacterized protein (308 aa).

This is an uncharacterized protein from Escherichia coli (strain K12).